The chain runs to 346 residues: Biotin synthase (346 aa).

The 219-residue stretch at 38-256 (RQVQVSTLLS…IAIARIMMPT (219 aa)) folds into the Radical SAM core domain. Positions 53, 57, and 60 each coordinate [4Fe-4S] cluster. Cysteine 97, cysteine 128, cysteine 188, and arginine 260 together coordinate [2Fe-2S] cluster.

Belongs to the radical SAM superfamily. Biotin synthase family. As to quaternary structure, homodimer. [4Fe-4S] cluster is required as a cofactor. [2Fe-2S] cluster serves as cofactor.

It carries out the reaction (4R,5S)-dethiobiotin + (sulfur carrier)-SH + 2 reduced [2Fe-2S]-[ferredoxin] + 2 S-adenosyl-L-methionine = (sulfur carrier)-H + biotin + 2 5'-deoxyadenosine + 2 L-methionine + 2 oxidized [2Fe-2S]-[ferredoxin]. The protein operates within cofactor biosynthesis; biotin biosynthesis; biotin from 7,8-diaminononanoate: step 2/2. Its function is as follows. Catalyzes the conversion of dethiobiotin (DTB) to biotin by the insertion of a sulfur atom into dethiobiotin via a radical-based mechanism. This is Biotin synthase from Klebsiella pneumoniae (strain 342).